The sequence spans 360 residues: Glutamate 5-kinase (360 aa).

Residue Lys7 coordinates ATP. Residues Ser47, Asp134, and Asn146 each contribute to the substrate site. Residues Thr166–Asp167 and Thr208–Lys214 each bind ATP. One can recognise a PUA domain in the interval Val273–Thr344.

The protein belongs to the glutamate 5-kinase family.

The protein resides in the cytoplasm. The enzyme catalyses L-glutamate + ATP = L-glutamyl 5-phosphate + ADP. It participates in amino-acid biosynthesis; L-proline biosynthesis; L-glutamate 5-semialdehyde from L-glutamate: step 1/2. In terms of biological role, catalyzes the transfer of a phosphate group to glutamate to form L-glutamate 5-phosphate. In Prochlorococcus marinus (strain NATL2A), this protein is Glutamate 5-kinase.